A 426-amino-acid polypeptide reads, in one-letter code: Glutamate-1-semialdehyde 2,1-aminomutase (426 aa).

Lys-265 carries the post-translational modification N6-(pyridoxal phosphate)lysine.

Belongs to the class-III pyridoxal-phosphate-dependent aminotransferase family. HemL subfamily. As to quaternary structure, homodimer. It depends on pyridoxal 5'-phosphate as a cofactor.

The protein resides in the cytoplasm. It catalyses the reaction (S)-4-amino-5-oxopentanoate = 5-aminolevulinate. Its pathway is porphyrin-containing compound metabolism; protoporphyrin-IX biosynthesis; 5-aminolevulinate from L-glutamyl-tRNA(Glu): step 2/2. This chain is Glutamate-1-semialdehyde 2,1-aminomutase, found in Salmonella heidelberg (strain SL476).